The chain runs to 88 residues: Large ribosomal subunit protein uL23c (88 aa).

Belongs to the universal ribosomal protein uL23 family. As to quaternary structure, part of the 50S ribosomal subunit.

The protein resides in the plastid. It is found in the chloroplast. Its function is as follows. Binds to 23S rRNA. The protein is Large ribosomal subunit protein uL23c (rpl23) of Spirogyra maxima (Green alga).